A 382-amino-acid chain; its full sequence is V-type proton ATPase subunit C 1 (382 aa).

Thr2 carries the N-acetylthreonine modification.

The protein belongs to the V-ATPase C subunit family. V-ATPase is a heteromultimeric enzyme made up of two complexes: the ATP-hydrolytic V1 complex and the proton translocation V0 complex. The V1 complex consists of three catalytic AB heterodimers that form a heterohexamer, three peripheral stalks each consisting of EG heterodimers, one central rotor including subunits D and F, and the regulatory subunits C and H. The proton translocation complex V0 consists of the proton transport subunit a, a ring of proteolipid subunits c9c'', rotary subunit d, subunits e and f, and the accessory subunits ATP6AP1/Ac45 and ATP6AP2/PRR. Expressed in brain (at protein level).

The protein localises to the cytoplasmic vesicle. It is found in the secretory vesicle. It localises to the synaptic vesicle membrane. The protein resides in the clathrin-coated vesicle membrane. Functionally, subunit of the V1 complex of vacuolar(H+)-ATPase (V-ATPase), a multisubunit enzyme composed of a peripheral complex (V1) that hydrolyzes ATP and a membrane integral complex (V0) that translocates protons. V-ATPase is responsible for acidifying and maintaining the pH of intracellular compartments and in some cell types, is targeted to the plasma membrane, where it is responsible for acidifying the extracellular environment. Subunit C is necessary for the assembly of the catalytic sector of the enzyme and is likely to have a specific function in its catalytic activity. This is V-type proton ATPase subunit C 1 (Atp6v1c1) from Rattus norvegicus (Rat).